A 121-amino-acid chain; its full sequence is Peptidyl-tRNA hydrolase (121 aa).

This sequence belongs to the PTH2 family.

The protein resides in the cytoplasm. It catalyses the reaction an N-acyl-L-alpha-aminoacyl-tRNA + H2O = an N-acyl-L-amino acid + a tRNA + H(+). Its function is as follows. The natural substrate for this enzyme may be peptidyl-tRNAs which drop off the ribosome during protein synthesis. The chain is Peptidyl-tRNA hydrolase from Staphylothermus marinus (strain ATCC 43588 / DSM 3639 / JCM 9404 / F1).